A 135-amino-acid polypeptide reads, in one-letter code: Protein PsiE homolog (135 aa).

The next 4 membrane-spanning stretches (helical) occupy residues 20 to 40, 54 to 74, 82 to 102, and 107 to 127; these read VGLI…TIHL, YMLI…ALIV, HFPL…LIIV, and PIDT…LYLA.

The protein belongs to the PsiE family.

The protein localises to the cell inner membrane. This is Protein PsiE homolog from Yersinia pestis (strain Pestoides F).